A 172-amino-acid polypeptide reads, in one-letter code: Bifunctional protein PyrR (172 aa).

Residues 90–102 carry the PRPP-binding motif; that stretch reads LVLVDDVLMSGRT.

This sequence belongs to the purine/pyrimidine phosphoribosyltransferase family. PyrR subfamily.

It catalyses the reaction UMP + diphosphate = 5-phospho-alpha-D-ribose 1-diphosphate + uracil. Its function is as follows. Regulates the transcription of the pyrimidine nucleotide (pyr) operon in response to exogenous pyrimidines. In terms of biological role, also displays a weak uracil phosphoribosyltransferase activity which is not physiologically significant. This is Bifunctional protein PyrR from Pseudomonas putida (strain GB-1).